The following is a 285-amino-acid chain: MATKLQDGNIPCLAATPSEPRPTVLVFDSGVGGLSVYDEIRHLLPDLHYIYAFDNVAFPYGEKSEVFIVERVVEIVTAVQERYPLALAVVACNTASTVSLPALREKFDFPVVGVVPAIKPAARLTANGIVGLLATRGTVKRSYTHELIARFANECQIEMLGSAEMVELAEAKLHGEDVSLDALKRILRPWLRMKEPPDTVVLGCTHFPLLQEELLQVLPEGTRLVDSGAAIARRTAWLLEHEAPDAKSADANIAFCMAMTPEAEQLLPVLQRYGFETLEKLAVLD.

Substrate-binding positions include 28–29 and 60–61; these read DS and YG. Residue C92 is the Proton donor/acceptor of the active site. 93–94 serves as a coordination point for substrate; it reads NT. The active-site Proton donor/acceptor is the C204. Substrate is bound at residue 205 to 206; that stretch reads TH.

Belongs to the aspartate/glutamate racemases family.

The enzyme catalyses L-glutamate = D-glutamate. It functions in the pathway cell wall biogenesis; peptidoglycan biosynthesis. Its function is as follows. Provides the (R)-glutamate required for cell wall biosynthesis. The protein is Glutamate racemase of Escherichia coli O6:H1 (strain CFT073 / ATCC 700928 / UPEC).